The following is a 518-amino-acid chain: U3 small nucleolar RNA-associated protein 15 homolog (518 aa).

Residue Ala2 is modified to N-acetylalanine. WD repeat units follow at residues 36–75, 78–117, 120–159, 162–202, 204–242, 246–285, and 287–326; these read KEFG…PIKT, RFKD…PLRQ, GHTK…EILT, EHSD…SVLS, EHGQ…QLLV, NHHK…VVHS, and DYAA…KKES. Residue Lys249 forms a Glycyl lysine isopeptide (Lys-Gly) (interchain with G-Cter in SUMO2) linkage.

Part of the small subunit (SSU) processome, composed of more than 70 proteins and the RNA chaperone small nucleolar RNA (snoRNA) U3. May be a component of the proposed t-UTP subcomplex of the ribosomal small subunit (SSU) processome containing at least UTP4, WDR43, HEATR1, UTP15, WDR75. Interacts directly with UTP4 and WDR43.

Its subcellular location is the nucleus. It localises to the nucleolus. Ribosome biogenesis factor. Involved in nucleolar processing of pre-18S ribosomal RNA. Required for optimal pre-ribosomal RNA transcription by RNA polymerase I. Part of the small subunit (SSU) processome, first precursor of the small eukaryotic ribosomal subunit. During the assembly of the SSU processome in the nucleolus, many ribosome biogenesis factors, an RNA chaperone and ribosomal proteins associate with the nascent pre-rRNA and work in concert to generate RNA folding, modifications, rearrangements and cleavage as well as targeted degradation of pre-ribosomal RNA by the RNA exosome. The chain is U3 small nucleolar RNA-associated protein 15 homolog from Homo sapiens (Human).